Here is a 506-residue protein sequence, read N- to C-terminus: Aminoaldehyde dehydrogenase 2 (506 aa).

Asp101 contributes to the Na(+) binding site. Residues 161 to 163 and 187 to 190 contribute to the NAD(+) site; these read TPW and KPSE. Leu191 contacts Na(+). Residues 241-244 and Glu262 contribute to the NAD(+) site; that span reads STET. The active-site Proton acceptor is the Glu262. Cys297 functions as the Nucleophile in the catalytic mechanism. Residues Glu396 and Trp462 each coordinate NAD(+).

It belongs to the aldehyde dehydrogenase family.

It catalyses the reaction 4-aminobutanal + NAD(+) + H2O = 4-aminobutanoate + NADH + 2 H(+). The enzyme catalyses 3-aminopropanal + NAD(+) + H2O = beta-alanine + NADH + 2 H(+). It carries out the reaction 4-(trimethylamino)butanal + NAD(+) + H2O = 4-(trimethylamino)butanoate + NADH + 2 H(+). The catalysed reaction is 4-guanidinobutanal + NAD(+) + H2O = 4-guanidinobutanoate + NADH + 2 H(+). Its pathway is amine and polyamine biosynthesis; betaine biosynthesis via choline pathway; betaine from betaine aldehyde: step 1/1. Dehydrogenase that catalyzes the oxidation of several aminoaldehydes. Metabolizes and detoxifies aldehyde products of polyamine degradation to non-toxic amino acids. Catalyzes the oxidation of 4-aminobutanal and 3-aminopropanal to 4-aminobutanoate and beta-alanine, respectively. Catalyzes the oxidation of 4-(trimethylamino)butanal and 4-guanidinobutanal to 4-trimethylammoniobutanoate and 4-guanidinobutanoate, respectively. The sequence is that of Aminoaldehyde dehydrogenase 2 from Zea mays (Maize).